Reading from the N-terminus, the 173-residue chain is Flavodoxin 2 (173 aa).

The region spanning 3-165 (MGLFYGSSTC…RIQTWCEQIL (163 aa)) is the Flavodoxin-like domain.

It belongs to the flavodoxin family. Requires FMN as cofactor.

Its function is as follows. Low-potential electron donor to a number of redox enzymes. This Salmonella typhi protein is Flavodoxin 2 (fldB).